A 224-amino-acid chain; its full sequence is N-(5'-phosphoribosyl)anthranilate isomerase (224 aa).

The protein belongs to the TrpF family.

It carries out the reaction N-(5-phospho-beta-D-ribosyl)anthranilate = 1-(2-carboxyphenylamino)-1-deoxy-D-ribulose 5-phosphate. It participates in amino-acid biosynthesis; L-tryptophan biosynthesis; L-tryptophan from chorismate: step 3/5. This is N-(5'-phosphoribosyl)anthranilate isomerase from Allorhizobium ampelinum (strain ATCC BAA-846 / DSM 112012 / S4) (Agrobacterium vitis (strain S4)).